Here is a 505-residue protein sequence, read N- to C-terminus: Glycerol kinase (505 aa).

Position 14 (threonine 14) interacts with ADP. ATP is bound by residues threonine 14, threonine 15, and serine 16. Sn-glycerol 3-phosphate is bound at residue threonine 14. Arginine 18 contributes to the ADP binding site. Residues arginine 84, glutamate 85, tyrosine 136, and aspartate 246 each coordinate sn-glycerol 3-phosphate. Glycerol-binding residues include arginine 84, glutamate 85, tyrosine 136, aspartate 246, and glutamine 247. The ADP site is built by threonine 268 and glycine 311. 4 residues coordinate ATP: threonine 268, glycine 311, glutamine 315, and glycine 412. ADP contacts are provided by glycine 412 and asparagine 416.

It belongs to the FGGY kinase family.

The catalysed reaction is glycerol + ATP = sn-glycerol 3-phosphate + ADP + H(+). The protein operates within polyol metabolism; glycerol degradation via glycerol kinase pathway; sn-glycerol 3-phosphate from glycerol: step 1/1. Its activity is regulated as follows. Inhibited by fructose 1,6-bisphosphate (FBP). Functionally, key enzyme in the regulation of glycerol uptake and metabolism. Catalyzes the phosphorylation of glycerol to yield sn-glycerol 3-phosphate. This chain is Glycerol kinase, found in Vibrio cholerae serotype O1 (strain ATCC 39315 / El Tor Inaba N16961).